Here is a 478-residue protein sequence, read N- to C-terminus: ATP-dependent RNA helicase DDX19A (478 aa).

Residue A2 is modified to N-acetylalanine. Residues A2 to E299 form an N-terminal lobe region. Residue K26 forms a Glycyl lysine isopeptide (Lys-Gly) (interchain with G-Cter in SUMO1); alternate linkage. Residue K26 forms a Glycyl lysine isopeptide (Lys-Gly) (interchain with G-Cter in SUMO2); alternate linkage. The residue at position 42 (T42) is a Phosphothreonine. Residues D54 to S67 are N-terminal helix. Positions K91–E119 match the Q motif motif. ATP-binding positions include Q118 and S137–T144. The region spanning M124–I294 is the Helicase ATP-binding domain. The short motif at D241–D244 is the DEAD box element. Residues E300 to N478 are C-terminal lobe. Residues T305–I473 form the Helicase C-terminal domain. ATP contacts are provided by R428 and R431.

The protein belongs to the DEAD box helicase family. DDX19/DBP5 subfamily.

It localises to the cytoplasm. Its subcellular location is the nucleus. The protein resides in the nucleoplasm. It carries out the reaction ATP + H2O = ADP + phosphate + H(+). Its function is as follows. ATP-dependent RNA helicase involved in mRNA export from the nucleus. Rather than unwinding RNA duplexes, DDX19 functions as a remodeler of ribonucleoprotein particles, whereby proteins bound to nuclear mRNA are dissociated and replaced by cytoplasmic mRNA binding proteins. In Homo sapiens (Human), this protein is ATP-dependent RNA helicase DDX19A (DDX19A).